Here is a 467-residue protein sequence, read N- to C-terminus: ATP-dependent rRNA helicase rrp3 (467 aa).

A disordered region spans residues 1–48 (MPGVKKRKVAREAPAPAPAQESDVESSTPEQTQEPEAQEQEQEEGQSK). A Q motif motif is present at residues 48 to 76 (KTFKELGIIEQLCEACETMGYKAPTPIQR). The Helicase ATP-binding domain occupies 79 to 250 (IPLALKGRDL…RASLSNPLRV (172 aa)). 92-99 (AETGSGKT) contributes to the ATP binding site. The DEAD box motif lies at 198–201 (DEAD). The Helicase C-terminal domain maps to 262–422 (TLLQSYLFIP…EYDCPKDEVM (161 aa)). The segment at 439 to 467 (MKDYNEKKGSRGKKFGGKRSRDEMDQEEG) is disordered.

This sequence belongs to the DEAD box helicase family. DDX47/RRP3 subfamily. As to quaternary structure, interacts with the SSU processome.

It localises to the nucleus. It catalyses the reaction ATP + H2O = ADP + phosphate + H(+). In terms of biological role, ATP-dependent rRNA helicase required for pre-ribosomal RNA processing. Involved in the maturation of the 35S-pre-rRNA and to its cleavage to mature 18S rRNA. This Aspergillus niger (strain ATCC MYA-4892 / CBS 513.88 / FGSC A1513) protein is ATP-dependent rRNA helicase rrp3.